Reading from the N-terminus, the 31-residue chain is Cyclotide vpub-A (31 aa).

Residues 1–31 (GVIPCGESCVFIPCISAVIGCSCKSKVCYRN) constitute a cross-link (cyclopeptide (Gly-Asn)). Intrachain disulfides connect Cys5/Cys21, Cys9/Cys23, and Cys14/Cys28.

The protein belongs to the cyclotide family. Bracelet subfamily. This is a cyclic peptide.

In terms of biological role, probably participates in a plant defense mechanism. This is Cyclotide vpub-A from Viola pubescens (Downy yellow violet).